We begin with the raw amino-acid sequence, 249 residues long: MIQMTLIQIDNYGPWTVTPTPRNEADLQIMQAELYADLQRQFAARQGLVFFTRFDNMLAVTNGMDLEDHRRIQKSIGNRYPITVSMGVGAAETPYDAQRNASRALQSHGGAQSEERKEVLAIDGLVDEGYVQIAHIDINGITETMTDIVPAYDTSFIVNRVQHFLMKKLIKEGALLFFIGGDNFMSPCNGLEPQGLLRIINEIDDEINVALKAGIGKAPTAEKAANLADLALEEIRGGFTYDLVHVMKE.

The protein belongs to the archaeal-type GTP cyclohydrolase family.

It catalyses the reaction GTP + 3 H2O = 2-amino-5-formylamino-6-(5-phospho-D-ribosylamino)pyrimidin-4(3H)-one + 2 phosphate + 2 H(+). Functionally, catalyzes the formation of 2-amino-5-formylamino-6-ribofuranosylamino-4(3H)-pyrimidinone ribonucleotide monophosphate and inorganic phosphate from GTP. Also has an independent pyrophosphate phosphohydrolase activity. This Methanothermobacter thermautotrophicus (strain ATCC 29096 / DSM 1053 / JCM 10044 / NBRC 100330 / Delta H) (Methanobacterium thermoautotrophicum) protein is GTP cyclohydrolase III.